The following is a 141-amino-acid chain: Small ribosomal subunit protein uS19 (141 aa).

This sequence belongs to the universal ribosomal protein uS19 family.

Protein S19 forms a complex with S13 that binds strongly to the 16S ribosomal RNA. This is Small ribosomal subunit protein uS19 from Thermofilum pendens (strain DSM 2475 / Hrk 5).